Here is a 128-residue protein sequence, read N- to C-terminus: Large ribosomal subunit protein bL19 (128 aa).

Belongs to the bacterial ribosomal protein bL19 family.

Its function is as follows. This protein is located at the 30S-50S ribosomal subunit interface and may play a role in the structure and function of the aminoacyl-tRNA binding site. This chain is Large ribosomal subunit protein bL19, found in Paracidovorax citrulli (strain AAC00-1) (Acidovorax citrulli).